The primary structure comprises 526 residues: Bifunctional purine biosynthesis protein PurH (526 aa).

One can recognise an MGS-like domain in the interval 1–145; it reads MSKAPLALLS…KNHAHVGIVT (145 aa).

It belongs to the PurH family.

The catalysed reaction is (6R)-10-formyltetrahydrofolate + 5-amino-1-(5-phospho-beta-D-ribosyl)imidazole-4-carboxamide = 5-formamido-1-(5-phospho-D-ribosyl)imidazole-4-carboxamide + (6S)-5,6,7,8-tetrahydrofolate. It catalyses the reaction IMP + H2O = 5-formamido-1-(5-phospho-D-ribosyl)imidazole-4-carboxamide. It functions in the pathway purine metabolism; IMP biosynthesis via de novo pathway; 5-formamido-1-(5-phospho-D-ribosyl)imidazole-4-carboxamide from 5-amino-1-(5-phospho-D-ribosyl)imidazole-4-carboxamide (10-formyl THF route): step 1/1. The protein operates within purine metabolism; IMP biosynthesis via de novo pathway; IMP from 5-formamido-1-(5-phospho-D-ribosyl)imidazole-4-carboxamide: step 1/1. This is Bifunctional purine biosynthesis protein PurH from Psychrobacter cryohalolentis (strain ATCC BAA-1226 / DSM 17306 / VKM B-2378 / K5).